A 257-amino-acid polypeptide reads, in one-letter code: 5'-nucleotidase SurE (257 aa).

A divalent metal cation is bound by residues aspartate 8, aspartate 9, serine 40, and asparagine 95.

Belongs to the SurE nucleotidase family. It depends on a divalent metal cation as a cofactor.

It localises to the cytoplasm. It catalyses the reaction a ribonucleoside 5'-phosphate + H2O = a ribonucleoside + phosphate. Its function is as follows. Nucleotidase that shows phosphatase activity on nucleoside 5'-monophosphates. The protein is 5'-nucleotidase SurE of Desulfovibrio desulfuricans (strain ATCC 27774 / DSM 6949 / MB).